A 383-amino-acid chain; its full sequence is Neuropeptide Y receptor type 1 (383 aa).

Residues 1–44 (MNSTSFSQVENHSIYYNFSEKNSRFLAFENDDCHLPLAMIFTLA) are Extracellular-facing. N-linked (GlcNAc...) asparagine glycans are attached at residues asparagine 2, asparagine 11, and asparagine 17. A helical membrane pass occupies residues 45–65 (LAYGAVIILGVSGNLALIIII). Residues 66-76 (LKQKEMRNVTN) are Cytoplasmic-facing. The chain crosses the membrane as a helical span at residues 77 to 97 (ILIVNLSFSDLLVAIMCLPFT). Topologically, residues 98 to 116 (FVYTLMDHWVFGEAMCKLN) are extracellular. A disulfide bond links cysteine 113 and cysteine 198. Residues 117–137 (PFVQCVSITVSIFSLVLIAVE) traverse the membrane as a helical segment. Residues 138–154 (RHQLIINPRGWRPNNRH) are Cytoplasmic-facing. Residues 155–175 (AYVGIAVIWVLAVASSLPFLI) traverse the membrane as a helical segment. At 176 to 211 (YQVLTDEPFQNVTLDAFKDKYVCFDKFPSDSHRLSY) the chain is on the extracellular side. Asparagine 186 carries N-linked (GlcNAc...) asparagine glycosylation. Residues 212–232 (TTLLLVLQYFGPLCFIFICYF) form a helical membrane-spanning segment. Residues 233–260 (KIYVRLKRRNSMMDKMRDNKYRSSEAKR) lie on the Cytoplasmic side of the membrane. Residues 261–281 (INIMLLSIVVAFAVCWLPLTI) traverse the membrane as a helical segment. Topologically, residues 282 to 299 (FNTVFDWDHQIIATCNHN) are extracellular. A helical transmembrane segment spans residues 300-320 (LLFLLCHLTAMISTCVNPIFY). Over 321–383 (GFLNKNFQRD…KIHTDDNEKI (63 aa)) the chain is Cytoplasmic. A lipid anchor (S-palmitoyl cysteine) is attached at cysteine 338. Position 368 is a phosphoserine (serine 368).

Belongs to the G-protein coupled receptor 1 family.

It is found in the cell membrane. Functionally, receptor for neuropeptide Y and peptide YY. The polypeptide is Neuropeptide Y receptor type 1 (NPY1R) (Bos taurus (Bovine)).